A 249-amino-acid chain; its full sequence is MSFTVIIPARYQSTRLPGKPLADICGKPMIQWVYEQASKAGADRVIIATDDSRIEAVVKGFGGDVCMTSPNHESGTERLAEVIEKCGISADEIVVNVQGDEPLIPPSIIQQVAQNLSDSVAPMATLAVTIDEEDDVFNPNAVKVVTDAEGYALYFSRASIPWDRDAFAQGETLTANPLLRHIGIYAYRAGFINTYINWQPSVLEKIECLEQLRVLWYGEKIHVAVAKEAPAAGVDTPEDLEKVRAILSK.

Belongs to the KdsB family.

It localises to the cytoplasm. It carries out the reaction 3-deoxy-alpha-D-manno-oct-2-ulosonate + CTP = CMP-3-deoxy-beta-D-manno-octulosonate + diphosphate. Its pathway is nucleotide-sugar biosynthesis; CMP-3-deoxy-D-manno-octulosonate biosynthesis; CMP-3-deoxy-D-manno-octulosonate from 3-deoxy-D-manno-octulosonate and CTP: step 1/1. It functions in the pathway bacterial outer membrane biogenesis; lipopolysaccharide biosynthesis. Its function is as follows. Activates KDO (a required 8-carbon sugar) for incorporation into bacterial lipopolysaccharide in Gram-negative bacteria. This chain is 3-deoxy-manno-octulosonate cytidylyltransferase, found in Aliivibrio fischeri (strain ATCC 700601 / ES114) (Vibrio fischeri).